A 451-amino-acid chain; its full sequence is NADP-specific glutamate dehydrogenase (451 aa).

The active site involves Lys-114.

Belongs to the Glu/Leu/Phe/Val dehydrogenases family. Homohexamer.

It carries out the reaction L-glutamate + NADP(+) + H2O = 2-oxoglutarate + NH4(+) + NADPH + H(+). The chain is NADP-specific glutamate dehydrogenase (GDH2) from Fusarium fujikuroi (Bakanae and foot rot disease fungus).